The following is a 432-amino-acid chain: Glutamate-1-semialdehyde 2,1-aminomutase (432 aa).

Residue Lys-269 is modified to N6-(pyridoxal phosphate)lysine.

It belongs to the class-III pyridoxal-phosphate-dependent aminotransferase family. HemL subfamily. In terms of assembly, homodimer. Pyridoxal 5'-phosphate is required as a cofactor.

The protein localises to the cytoplasm. The catalysed reaction is (S)-4-amino-5-oxopentanoate = 5-aminolevulinate. It functions in the pathway porphyrin-containing compound metabolism; protoporphyrin-IX biosynthesis; 5-aminolevulinate from L-glutamyl-tRNA(Glu): step 2/2. The protein operates within porphyrin-containing compound metabolism; chlorophyll biosynthesis. The polypeptide is Glutamate-1-semialdehyde 2,1-aminomutase (Chloroherpeton thalassium (strain ATCC 35110 / GB-78)).